The following is a 442-amino-acid chain: MAATDLERVSSAEPEPRSLSLGGHVGFDSLPDQLVSKSVTQGFSFNILCVGETGIGKSTLMNTLFNTTFETEEASHHEACVRLRPQTYDLQESNVHLKLTIVDAVGFGDQINKDESYRPIVDYIDAQFENYLQEELKIRRSLFDYHDTRIHVCLYFITPTGHSLKSLDLVTMKKLDSKVNIIPIIAKADTISKSELHKFKIKIMGELVSNGVQIYQFPTDDEAVAEINAVMNAHLPFAVVGSTEEVKVGNKLVRARQYPWGVVQVENENHCDFVKLREMLIRVNMEDLREQTHSRHYELYRRCKLEEMGFQDSDGDSQPFSLQETYEAKRKEFLSELQRKEEEMRQMFVNKVKETELELKEKERELHEKFEHLKRVHQEEKRKVEEKRRELEEETNAFNRRKAAVEALQSQALHATSQQPLRKDKDKKKASGWSSIYSVTIP.

Basic and acidic residues predominate over residues 1–16 (MAATDLERVSSAEPEP). A disordered region spans residues 1–23 (MAATDLERVSSAEPEPRSLSLGG). Ala-2 carries the N-acetylalanine modification. At Ser-10 the chain carries Phosphoserine. The 267-residue stretch at 41 to 307 (QGFSFNILCV…ELYRRCKLEE (267 aa)) folds into the Septin-type G domain. Residues 51–58 (GETGIGKS) are G1 motif. GTP is bound by residues 51–58 (GETGIGKS), Gly-106, 187–195 (KADTISKSE), Gly-241, and Arg-256. Residues 103 to 106 (DAVG) form a G3 motif region. The tract at residues 186 to 189 (AKAD) is G4 motif. The stretch at 322-410 (LQETYEAKRK…RKAAVEALQS (89 aa)) forms a coiled coil. The segment covering 377–391 (HQEEKRKVEEKRREL) has biased composition (basic and acidic residues). The interval 377–442 (HQEEKRKVEE…WSSIYSVTIP (66 aa)) is disordered. Polar residues-rich tracts occupy residues 408–420 (LQSQ…SQQP) and 432–442 (GWSSIYSVTIP).

The protein belongs to the TRAFAC class TrmE-Era-EngA-EngB-Septin-like GTPase superfamily. Septin GTPase family. Septins polymerize into heterooligomeric protein complexes that form filaments, and can associate with cellular membranes, actin filaments and microtubules. GTPase activity is required for filament formation. Interacts with CDK14, SEPTIN4, SEPTIN5 and SEPTIN7. Interacts with VAMP2; the interaction inhibits interaction of VAMP2 with SYP. Interacts with STX1A.

Its subcellular location is the cytoplasm. The protein localises to the cytoskeleton. It localises to the synapse. It is found in the cell projection. The protein resides in the axon. Its subcellular location is the cytoplasmic vesicle. The protein localises to the secretory vesicle. It localises to the synaptic vesicle membrane. It is found in the presynapse. Its function is as follows. Filament-forming cytoskeletal GTPase. May play a role in platelet secretion. Seems to participate in the process of SNARE complex formation in synaptic vesicles. The polypeptide is Septin-8 (Otolemur garnettii (Small-eared galago)).